Here is a 320-residue protein sequence, read N- to C-terminus: o-succinylbenzoate synthase (320 aa).

K133 serves as the catalytic Proton donor. Residues D161, E190, and D213 each contribute to the Mg(2+) site. K235 serves as the catalytic Proton acceptor.

Belongs to the mandelate racemase/muconate lactonizing enzyme family. MenC type 1 subfamily. A divalent metal cation serves as cofactor.

It carries out the reaction (1R,6R)-6-hydroxy-2-succinyl-cyclohexa-2,4-diene-1-carboxylate = 2-succinylbenzoate + H2O. Its pathway is quinol/quinone metabolism; 1,4-dihydroxy-2-naphthoate biosynthesis; 1,4-dihydroxy-2-naphthoate from chorismate: step 4/7. The protein operates within quinol/quinone metabolism; menaquinone biosynthesis. Its function is as follows. Converts 2-succinyl-6-hydroxy-2,4-cyclohexadiene-1-carboxylate (SHCHC) to 2-succinylbenzoate (OSB). The sequence is that of o-succinylbenzoate synthase from Salmonella heidelberg (strain SL476).